Reading from the N-terminus, the 123-residue chain is Small ribosomal subunit protein uS12 (123 aa).

A disordered region spans residues 1–21 (MPTIEQLVRKGRQAKPKKSKT). The span at 9-20 (RKGRQAKPKKSK) shows a compositional bias: basic residues. Asp89 carries the 3-methylthioaspartic acid modification.

This sequence belongs to the universal ribosomal protein uS12 family. In terms of assembly, part of the 30S ribosomal subunit. Contacts proteins S8 and S17. May interact with IF1 in the 30S initiation complex.

In terms of biological role, with S4 and S5 plays an important role in translational accuracy. Functionally, interacts with and stabilizes bases of the 16S rRNA that are involved in tRNA selection in the A site and with the mRNA backbone. Located at the interface of the 30S and 50S subunits, it traverses the body of the 30S subunit contacting proteins on the other side and probably holding the rRNA structure together. The combined cluster of proteins S8, S12 and S17 appears to hold together the shoulder and platform of the 30S subunit. In Bifidobacterium adolescentis (strain ATCC 15703 / DSM 20083 / NCTC 11814 / E194a), this protein is Small ribosomal subunit protein uS12.